The chain runs to 687 residues: Solute carrier organic anion transporter family member 1B2 (687 aa).

The Cytoplasmic portion of the chain corresponds to 1–28 (MDHTQQSRKAAEAQPSRSKQTRFCDGFK). The chain crosses the membrane as a helical span at residues 29–48 (LFLAALSFSYICKALGGVVM). The Extracellular segment spans residues 49–67 (KSSITQIERRFDIPSSISG). A helical transmembrane segment spans residues 68 to 88 (LIDGGFEIGNLLVIVFVSYFG). At 89-94 (SKLHRP) the chain is on the cytoplasmic side. The helical transmembrane segment at 95 to 119 (KLIGIGCFIMGIGSILTALPHFFMG) threads the bilayer. Over 120–165 (YYKYAKENDIGSLGNSTLTCFINQMTSPTGPSPEIVEKGCEKGLKS) the chain is Extracellular. An N-linked (GlcNAc...) asparagine glycan is attached at asparagine 134. The chain crosses the membrane as a helical span at residues 166–194 (HMWIYVLMGNMLRGIGETPIVPLGISYLD). Topologically, residues 195-213 (DFAKEGHTSMHLGTLHTIA) are cytoplasmic. The helical transmembrane segment at 214–234 (MIGPILGFIMSSVFAKIYVDV) threads the bilayer. Residues 235–252 (GYVDLNSVRITPNDARWV) lie on the Extracellular side of the membrane. The chain crosses the membrane as a helical span at residues 253 to 277 (GAWWLSFIVNGLLCITSSIPFFFLP). Over 278-328 (KIPKRSQEERKNSVSLHAPKTDEEKKHMTNLTKQEEQDPSNMTGFLRSLRS) the chain is Cytoplasmic. Residues 286 to 311 (ERKNSVSLHAPKTDEEKKHMTNLTKQ) are disordered. Serine 290 and serine 292 each carry phosphoserine. Residues 329-350 (ILTNEIYVIFLILTLLQVSGFI) traverse the membrane as a helical segment. The Extracellular segment spans residues 351–370 (GSFTYLFKFIEQQFGRTASQ). The chain crosses the membrane as a helical span at residues 371-394 (ANFLLGIITIPTMATAMFLGGYIV). Topologically, residues 395–398 (KKFK) are cytoplasmic. Residues 399–422 (LTSVGIAKFVFFTSSVAYAFQFLY) traverse the membrane as a helical segment. Residues 423 to 531 (FPLLCENKPF…YKCKTNYYFY (109 aa)) are Extracellular-facing. The region spanning 450 to 507 (DVPLSYCNSDCSCDKNQWEPICGENGVTYISPCLAGCKSFRGDKKPNNTEFYDCSCIS) is the Kazal-like domain. Disulfide bonds link cysteine 456–cysteine 486, cysteine 462–cysteine 482, and cysteine 471–cysteine 505. Residues asparagine 496 and asparagine 511 are each glycosylated (N-linked (GlcNAc...) asparagine). Residues 532-554 (IILQVTVSFFTAMGSPSLILILM) form a helical membrane-spanning segment. Topologically, residues 555 to 563 (KSVQPELKS) are cytoplasmic. The helical transmembrane segment at 564-589 (LAMGFHSLIIRALGGILAPIYYGAFI) threads the bilayer. Over 590 to 623 (DRTCIKWSVTSCGKRGACRLYNSRLFGFSYLGLN) the chain is Extracellular. The helical transmembrane segment at 624-641 (LALKTPPLFLYVVLIYFT) threads the bilayer. Residues 642–687 (KRKYKRNDNKTLENGRQFTDEGNPDSVNKNGYYCVPYDEQSNETPL) lie on the Cytoplasmic side of the membrane. Threonine 660 carries the post-translational modification Phosphothreonine. Serine 667 carries the phosphoserine modification.

It belongs to the organo anion transporter (TC 2.A.60) family. Liver specific. Expression is highest in central perivenous hepatocytes and lowest in the periportal region. Isoform 1 predominates. Not detected in heart, brain, kidney, skeletal muscle, lung, testis or spleen.

Its subcellular location is the basolateral cell membrane. It catalyses the reaction estrone 3-sulfate(out) = estrone 3-sulfate(in). The enzyme catalyses taurocholate(out) = taurocholate(in). The catalysed reaction is prostaglandin E2(out) = prostaglandin E2(in). It carries out the reaction L-thyroxine(out) = L-thyroxine(in). Functionally, mediates the Na(+)-independent uptake of organic anions such as taurochlate, bromosulfophthalein and steroid conjugates (estrone 3-sulfate, 17-beta-glucuronosyl estradiol, dehydroepiandrosterone sulfate). Also transports prostaglandin E2 and L-thyroxine (T4). Shows a pH-sensitive substrate specificity which may be ascribed to the protonation state of the binding site and leads to a stimulation of substrate transport in an acidic microenvironment. Hydrogencarbonate/HCO3(-) acts as the probable counteranion that exchanges for organic anions. The sequence is that of Solute carrier organic anion transporter family member 1B2 (Slco1b2) from Rattus norvegicus (Rat).